Here is a 275-residue protein sequence, read N- to C-terminus: Diaminopimelate epimerase (275 aa).

Substrate-binding residues include Asn-12, Gln-45, and Asn-65. Cys-74 (proton donor) is an active-site residue. Substrate is bound by residues 75 to 76, Asn-158, Asn-191, and 209 to 210; these read GN and ER. Cys-218 serves as the catalytic Proton acceptor. 219–220 lines the substrate pocket; the sequence is GT.

It belongs to the diaminopimelate epimerase family. Homodimer.

It is found in the cytoplasm. It carries out the reaction (2S,6S)-2,6-diaminopimelate = meso-2,6-diaminopimelate. It functions in the pathway amino-acid biosynthesis; L-lysine biosynthesis via DAP pathway; DL-2,6-diaminopimelate from LL-2,6-diaminopimelate: step 1/1. In terms of biological role, catalyzes the stereoinversion of LL-2,6-diaminopimelate (L,L-DAP) to meso-diaminopimelate (meso-DAP), a precursor of L-lysine and an essential component of the bacterial peptidoglycan. This chain is Diaminopimelate epimerase, found in Shewanella baltica (strain OS223).